A 378-amino-acid polypeptide reads, in one-letter code: Glutamate 5-kinase (378 aa).

An ATP-binding site is contributed by K21. 3 residues coordinate substrate: S61, D148, and N160. ATP is bound at residue 180 to 181 (TD). The region spanning 286–364 (RGTLVLDAGA…RRIEELLGYM (79 aa)) is the PUA domain.

This sequence belongs to the glutamate 5-kinase family.

It localises to the cytoplasm. It carries out the reaction L-glutamate + ATP = L-glutamyl 5-phosphate + ADP. It functions in the pathway amino-acid biosynthesis; L-proline biosynthesis; L-glutamate 5-semialdehyde from L-glutamate: step 1/2. In terms of biological role, catalyzes the transfer of a phosphate group to glutamate to form L-glutamate 5-phosphate. The polypeptide is Glutamate 5-kinase (Chromohalobacter salexigens (strain ATCC BAA-138 / DSM 3043 / CIP 106854 / NCIMB 13768 / 1H11)).